The chain runs to 458 residues: Protein RICE SALT SENSITIVE 3 (458 aa).

A compositionally biased stretch (gly residues) spans 1 to 17 (MVGSGAAGGGGGGGGGG). Disordered stretches follow at residues 1 to 21 (MVGS…DHAR), 220 to 325 (TSPS…PEGD), 354 to 374 (GGGA…GHGG), and 386 to 458 (SHSN…TFLE). The segment covering 220–232 (TSPSPSSFPLKQQ) has biased composition (low complexity). Pro residues predominate over residues 245–262 (HAPPQLPPGASPLFPPGP). Residues 308 to 317 (QQPMAAPQQH) are compositionally biased toward low complexity. Residues 413-436 (SSSTTSTSPSVSASTAPAPPQQQQ) show a composition bias toward low complexity.

As to quaternary structure, interacts with BHLH094, BHLH089, TIFY11A/JAZ9 and TIFY11C/JAZ11. Forms a ternary complex with TIFY11A/JAZ9 and BHLH094 in the nucleus. As to expression, expressed in root tips. Expressed at high levels in the meristematic zone and at low levels in the elongation zone of the root tip.

The protein localises to the nucleus. It is found in the cytoplasm. Functionally, involved in the repression of jasmonate (JA)-induced genes. Forms a ternary complex with TIFY11A/JAZ9 and BHLH094 to negatively regulate JA-responsive genes. Involved in transcriptional regulation in the root tip. Plays a regulatory role in root cell elongation. Regulates root cell elongation during salt stress. This chain is Protein RICE SALT SENSITIVE 3, found in Oryza sativa subsp. japonica (Rice).